A 1498-amino-acid polypeptide reads, in one-letter code: Rap guanine nucleotide exchange factor 2 (1498 aa).

Disordered regions lie at residues 40–59 (HVSS…SSSL) and 68–101 (SEAG…SDPL). The span at 83–94 (VDSEDDDDEEDI) shows a compositional bias: acidic residues. 135–252 (AFANMTMSVR…QKVEEEGEIV (118 aa)) serves as a coordination point for a nucleoside 3',5'-cyclic phosphate. The region spanning 267 to 380 (KGHIVIKGTS…RLLNIACAAK (114 aa)) is the N-terminal Ras-GEF domain. One can recognise a PDZ domain in the interval 385-468 (LMTLTKPSRE…LSITVKTNLF (84 aa)). The residue at position 501 (Ser-501) is a Phosphoserine. A Ras-associating domain is found at 606–692 (PDQVLRVFKA…GRYYLKNNME (87 aa)). A Phosphothreonine modification is found at Thr-644. Positions 717–944 (STVEVATQLS…SQGSTNATVL (228 aa)) constitute a Ras-GEF domain. Phosphoserine is present on residues Ser-806, Ser-930, Ser-933, Ser-1022, Ser-1079, Ser-1088, Ser-1094, Ser-1115, Ser-1119, Ser-1158, and Ser-1175. The tract at residues 1002–1048 (PATNTLPKNPGDKKPVKSETSPVAPRAGSQQKAQAQPPPPQPQPQHK) is disordered. Residues 1094–1159 (SLERHKKQAE…RSSIVSNSSF (66 aa)) form a disordered region. Composition is skewed to low complexity over residues 1110-1124 (SSQL…QSSP) and 1140-1159 (SDSG…NSSF). Disordered stretches follow at residues 1224–1257 (STEE…GSHD), 1304–1371 (TKYN…TKPV), and 1392–1498 (EGRY…VSAV). 2 stretches are compositionally biased toward polar residues: residues 1246–1257 (GSWTSCSSGSHD) and 1306–1330 (YNRQ…SSTG). Residues 1354–1365 (EAESSSVTSVTT) show a composition bias toward low complexity. Residues 1487–1498 (TEEDEDEQVSAV) are compositionally biased toward acidic residues.

Belongs to the RAPGEF2 family. As to quaternary structure, found in a complex, at least composed of KIDINS220, MAGI2, NTRK1 and RAPGEF2; the complex is mainly formed at late endosomes in a neuronal growth factor (NGF)-dependent manner. Interacts (via C-terminal domain) with NEDD4 (via WW domains); this interaction leads to ubiquitination and degradation via the proteasome pathway in a cAMP-independent manner. Interacts with MAGI1 (via PDZ domain). Interacts with ADRB1 (via C-terminal PDZ motif); the interaction is direct. Interacts (via Ras-associating domain) with RAP1A (via GTP-bound active form). Interacts weakly with HRAS (via GDP- and GTP-bound forms). Interacts (via C-terminal domain) with MAGI2 (via PDZ and WW domains). Interacts with CDH1, CTNNB1 and TJP1. In terms of processing, ubiquitinated by NEDD4, leading to proteasomal degradation. Phosphorylation by PLK2 promotes its activity.

It is found in the cell junction. Its subcellular location is the cytoplasm. It localises to the perinuclear region. The protein localises to the cell membrane. The protein resides in the late endosome. Functions as a guanine nucleotide exchange factor (GEF), which activates Rap and Ras family of small GTPases by exchanging bound GDP for free GTP in a cAMP-dependent manner. Serves as a link between cell surface receptors and Rap/Ras GTPases in intracellular signaling cascades. Also acts as an effector for Rap1 by direct association with Rap1-GTP thereby leading to the amplification of Rap1-mediated signaling. Shows weak activity on HRAS. It is controversial whether RAPGEF2 binds cAMP and cGMP or not. Its binding to ligand-activated beta-1 adrenergic receptor ADRB1 leads to the Ras activation through the G(s)-alpha signaling pathway. Involved in the cAMP-induced Ras and Erk1/2 signaling pathway that leads to sustained inhibition of long term melanogenesis by reducing dendrite extension and melanin synthesis. Also provides inhibitory signals for cell proliferation of melanoma cells and promotes their apoptosis in a cAMP-independent nanner. Regulates cAMP-induced neuritogenesis by mediating the Rap1/B-Raf/ERK signaling through a pathway that is independent on both PKA and RAPGEF3/RAPGEF4. Involved in neuron migration and in the formation of the major forebrain fiber connections forming the corpus callosum, the anterior commissure and the hippocampal commissure during brain development. Involved in neuronal growth factor (NGF)-induced sustained activation of Rap1 at late endosomes and in brain-derived neurotrophic factor (BDNF)-induced axon outgrowth of hippocampal neurons. Plays a role in the regulation of embryonic blood vessel formation and in the establishment of basal junction integrity and endothelial barrier function. May be involved in the regulation of the vascular endothelial growth factor receptor KDR and cadherin CDH5 expression at allantois endothelial cell-cell junctions. In Canis lupus familiaris (Dog), this protein is Rap guanine nucleotide exchange factor 2 (RAPGEF2).